Reading from the N-terminus, the 474-residue chain is Trigger factor (474 aa).

The 88-residue stretch at 171–258 (GDVAVIDFQG…LKELKTRDLP (88 aa)) folds into the PPIase FKBP-type domain. Residues 441 to 474 (TEVDAASATVETTATETAEEAPEAPKAKKGKKKA) are disordered. Residues 444–456 (DAASATVETTATE) show a composition bias toward low complexity.

This sequence belongs to the FKBP-type PPIase family. Tig subfamily.

It localises to the cytoplasm. It carries out the reaction [protein]-peptidylproline (omega=180) = [protein]-peptidylproline (omega=0). Involved in protein export. Acts as a chaperone by maintaining the newly synthesized protein in an open conformation. Functions as a peptidyl-prolyl cis-trans isomerase. This is Trigger factor from Synechococcus sp. (strain ATCC 27144 / PCC 6301 / SAUG 1402/1) (Anacystis nidulans).